Here is a 427-residue protein sequence, read N- to C-terminus: Glutamate-1-semialdehyde 2,1-aminomutase (427 aa).

K269 bears the N6-(pyridoxal phosphate)lysine mark.

It belongs to the class-III pyridoxal-phosphate-dependent aminotransferase family. HemL subfamily. Homodimer. Requires pyridoxal 5'-phosphate as cofactor.

The protein resides in the cytoplasm. It catalyses the reaction (S)-4-amino-5-oxopentanoate = 5-aminolevulinate. Its pathway is porphyrin-containing compound metabolism; protoporphyrin-IX biosynthesis; 5-aminolevulinate from L-glutamyl-tRNA(Glu): step 2/2. The sequence is that of Glutamate-1-semialdehyde 2,1-aminomutase from Thermus thermophilus (strain ATCC BAA-163 / DSM 7039 / HB27).